Consider the following 142-residue polypeptide: Translation initiation factor 2 subunit beta (142 aa).

Belongs to the eIF-2-beta/eIF-5 family. Heterotrimer composed of an alpha, a beta and a gamma chain.

Functionally, eIF-2 functions in the early steps of protein synthesis by forming a ternary complex with GTP and initiator tRNA. This is Translation initiation factor 2 subunit beta from Staphylothermus marinus (strain ATCC 43588 / DSM 3639 / JCM 9404 / F1).